The primary structure comprises 316 residues: Serpentine receptor class gamma-8 (316 aa).

Helical transmembrane passes span 28–48 (FVQV…LYVV), 60–80 (PFFM…IFIT), 106–126 (LYYP…IFLT), 147–167 (FSRI…NTII), 186–206 (IIPW…VVMI), 235–255 (ACAA…MKVL), and 267–287 (LVQP…MIFA).

The protein belongs to the nematode receptor-like protein srg family.

It is found in the membrane. This Caenorhabditis elegans protein is Serpentine receptor class gamma-8 (srg-8).